Here is a 466-residue protein sequence, read N- to C-terminus: Histidine--tRNA ligase (466 aa).

This sequence belongs to the class-II aminoacyl-tRNA synthetase family. As to quaternary structure, homodimer.

The protein localises to the cytoplasm. It catalyses the reaction tRNA(His) + L-histidine + ATP = L-histidyl-tRNA(His) + AMP + diphosphate + H(+). The protein is Histidine--tRNA ligase (hisS) of Xylella fastidiosa (strain 9a5c).